The primary structure comprises 320 residues: ATP-dependent 6-phosphofructokinase (320 aa).

Residue Gly-11 coordinates ATP. Residue 21 to 25 coordinates ADP; sequence RAVTK. ATP is bound by residues 72-73 and 102-105; these read RF and GDGS. Mg(2+) is bound at residue Asp-103. 125-127 contacts substrate; the sequence is TID. Residue Asp-127 is the Proton acceptor of the active site. ADP is bound at residue Arg-154. Substrate-binding positions include Arg-162 and 169 to 171; that span reads MGR. ADP-binding positions include 185–187 and 213–215; these read GAD and KDH. Residues Glu-222, Arg-243, and 249-252 each bind substrate; that span reads HMQR.

This sequence belongs to the phosphofructokinase type A (PFKA) family. ATP-dependent PFK group I subfamily. Prokaryotic clade 'B1' sub-subfamily. As to quaternary structure, homotetramer. The cofactor is Mg(2+).

It localises to the cytoplasm. It catalyses the reaction beta-D-fructose 6-phosphate + ATP = beta-D-fructose 1,6-bisphosphate + ADP + H(+). It functions in the pathway carbohydrate degradation; glycolysis; D-glyceraldehyde 3-phosphate and glycerone phosphate from D-glucose: step 3/4. Its activity is regulated as follows. Allosterically activated by ADP and other diphosphonucleosides, and allosterically inhibited by phosphoenolpyruvate. Functionally, catalyzes the phosphorylation of D-fructose 6-phosphate to fructose 1,6-bisphosphate by ATP, the first committing step of glycolysis. This chain is ATP-dependent 6-phosphofructokinase, found in Lactobacillus acidophilus (strain ATCC 700396 / NCK56 / N2 / NCFM).